The primary structure comprises 86 residues: Defensin-like SRCA-homolog protein (86 aa).

Residues 1 to 26 form the signal peptide; it reads MRCVVLFMVSCLLIVLLINHFEEVEA. Intrachain disulfides connect Cys-32–Cys-84, Cys-42–Cys-70, Cys-52–Cys-79, and Cys-68–Cys-81.

The protein belongs to the DEFL family.

The protein localises to the secreted. In terms of biological role, involved in male-mediated self-incompatibility. The protein is Defensin-like SRCA-homolog protein (SCR37) of Arabidopsis lyrata (Lyre-leaved rock-cress).